We begin with the raw amino-acid sequence, 1450 residues long: ABC transporter G family member 37 (1450 aa).

The ABC transporter 1 domain occupies 175–447; the sequence is VKLTGAKTHE…FEDCGFRCPE (273 aa). 207 to 214 is an ATP binding site; the sequence is GPPSCGKT. Positions 525-737 constitute an ABC transmembrane type-2 1 domain; sequence ELFIACISRE…GEIGLSVNEF (213 aa). 6 helical membrane-spanning segments follow: residues 544-564, 581-601, 615-635, 661-681, 687-707, and 773-793; these read VYIF…TVFI, ALFF…SMTA, FYPA…LSFF, FILL…LAAI, ASIT…GFVI, and LCAL…ALTF. The tract at residues 810 to 838 is disordered; the sequence is SELQGTEKSTEDSSVRKKTTDSPVKTEEE. Residues 817 to 838 are compositionally biased toward basic and acidic residues; sequence KSTEDSSVRKKTTDSPVKTEEE. The ABC transporter 2 domain maps to 850 to 1103; the sequence is VTFQDLNYFV…IIEYFESVPE (254 aa). 895–902 provides a ligand contact to ATP; that stretch reads GVSGAGKT. The ABC transmembrane type-2 2 domain maps to 1175 to 1389; sequence GQFKSILWKM…TLNGFISSQY (215 aa). 7 consecutive transmembrane segments (helical) span residues 1194 to 1214, 1226 to 1246, 1282 to 1302, 1313 to 1333, 1339 to 1359, 1365 to 1385, and 1422 to 1442; these read YNLM…ALFW, MFTV…NNCA, IPYI…MIGF, LYSM…LVSI, VAAI…GFLI, PGWW…NGFI, and VTAV…AFFV.

The protein belongs to the ABC transporter superfamily. ABCG family. PDR (TC 3.A.1.205) subfamily. As to expression, expressed in roots and, to a lower extent, in seedlings.

The protein localises to the cell membrane. Its function is as follows. Together with ABCG36, regulates auxin homeostasis and responses by playing a dual role in coumarin (and derivatives) and in the auxin precursor indole 3-butyric acid (IBA) efflux transport, thus influencing roots and root hairs development. Mediates coumarin exudation in the rhizosphere, especially in iron (Fe) deficient conditions, with a strong specificity for highly oxygenated compounds such as scopoletin and derivatives, dihydroxyscopoletin, esculetin, fraxin, fraxetin and esculin; these molecules improve plant Fe nutrition. Involved in the cellular detoxification of xenobiotics by promoting the excretion of some auxinic herbicides including 2,4-dichlorophenoxyacetic acid (2,4-D), 4-(2,4-dichlorophenoxy)butyric acid (2,4-DB) and other members of the phenoxyalkanoic acid family as well as the polar auxin transport inhibitor, napthylphthalamic acid (NPA). May be a general defense protein. This chain is ABC transporter G family member 37, found in Arabidopsis thaliana (Mouse-ear cress).